Reading from the N-terminus, the 98-residue chain is NADH-ubiquinone oxidoreductase chain 4L (98 aa).

Helical transmembrane passes span methionine 1–threonine 21, valine 27–isoleucine 47, and isoleucine 61–isoleucine 81.

The protein belongs to the complex I subunit 4L family. In terms of assembly, core subunit of respiratory chain NADH dehydrogenase (Complex I) which is composed of 45 different subunits.

The protein localises to the mitochondrion inner membrane. The catalysed reaction is a ubiquinone + NADH + 5 H(+)(in) = a ubiquinol + NAD(+) + 4 H(+)(out). Core subunit of the mitochondrial membrane respiratory chain NADH dehydrogenase (Complex I) which catalyzes electron transfer from NADH through the respiratory chain, using ubiquinone as an electron acceptor. Part of the enzyme membrane arm which is embedded in the lipid bilayer and involved in proton translocation. This chain is NADH-ubiquinone oxidoreductase chain 4L (MT-ND4L), found in Macaca mulatta (Rhesus macaque).